A 142-amino-acid chain; its full sequence is Pro-opiomelanocortin (142 aa).

The propeptide occupies 1-8 (SEPGRREG). Valine amide is present on V23. S41 carries the phosphoserine modification.

Belongs to the POMC family. Specific enzymatic cleavages at paired basic residues yield the different active peptides. In terms of tissue distribution, ACTH and MSH are produced by the pituitary gland.

The protein localises to the secreted. Its function is as follows. Stimulates the adrenal glands to release cortisol. Functionally, anorexigenic peptide. Increases the pigmentation of skin by increasing melanin production in melanocytes. In terms of biological role, increases the pigmentation of skin by increasing melanin production in melanocytes. Endogenous orexigenic opiate. Its function is as follows. Endogenous opiate. The chain is Pro-opiomelanocortin (POMC) from Neovison vison (American mink).